We begin with the raw amino-acid sequence, 508 residues long: General transcription factor IIF subunit 1 (508 aa).

The residue at position 2 (Ala2) is an N-acetylalanine. Thr156 bears the Phosphothreonine mark. The tract at residues 177 to 446 is disordered; it reads MQQRRLKDQD…TPSSGDVQVT (270 aa). Phosphoserine is present on residues Ser217, Ser218, Ser221, and Ser224. Residues 232–251 are compositionally biased toward basic residues; it reads SKAKKKAPVTKAGRKKKKKK. Composition is skewed to acidic residues over residues 255-270 and 303-325; these read DEAF…EGQE and EQSE…EEEE. Thr331 carries the post-translational modification Phosphothreonine. The span at 343 to 355 shows a compositional bias: acidic residues; the sequence is DDSDSSEESDIDS. Basic residues predominate over residues 364 to 374; the sequence is AKKKTPPKRER. 4 positions are modified to phosphoserine: Ser377, Ser380, Ser381, and Ser385. Over residues 378–388 the composition is skewed to polar residues; it reads GGSSKGTSRPG. Thr389 bears the Phosphothreonine mark. Over residues 389-406 the composition is skewed to low complexity; the sequence is TPSAEAASTSSTLRAAAS. At Ser391 the chain carries Phosphoserine. Lys407 is subject to N6-acetyllysine. Residues 428–443 show a composition bias toward polar residues; it reads GPQSLSGKSTPSSGDV. 3 positions are modified to phosphoserine: Ser431, Ser433, and Ser436. At Thr437 the chain carries Phosphothreonine. Ser440 is subject to Phosphoserine.

The protein belongs to the TFIIF alpha subunit family. As to quaternary structure, heterodimer of an alpha and a beta subunit. Interacts with GTF2F2, CTDP1, TAF6/TAFII80 and URI1. Interacts with GTF2B (via C-terminus and preferentially via acetylated form); this interaction prevents binding of GTF2B to GTF2F2. Part of TBP-based Pol II pre-initiation complex (PIC), in which Pol II core assembles with general transcription factors and other specific initiation factors including GTF2E1, GTF2E2, GTF2F1, GTF2F2, TCEA1, ERCC2, ERCC3, GTF2H2, GTF2H3, GTF2H4, GTF2H5, GTF2A1, GTF2A2, GTF2B and TBP; this large multi-subunit PIC complex mediates DNA unwinding and targets Pol II core to the transcription start site where the first phosphodiester bond forms. In terms of processing, phosphorylated on Ser and other residues by TAF1 and casein kinase II-like kinases.

The protein resides in the nucleus. TFIIF is a general transcription initiation factor that binds to RNA polymerase II and helps to recruit it to the initiation complex in collaboration with TFIIB. It promotes transcription elongation. The sequence is that of General transcription factor IIF subunit 1 (Gtf2f1) from Mus musculus (Mouse).